Consider the following 1805-residue polypeptide: Cytadherence high molecular weight protein 2 (1805 aa).

4 coiled-coil regions span residues 28 to 838, 914 to 1591, 1632 to 1723, and 1777 to 1804; these read EKNR…NNAF, ELKI…LRTQ, DNTL…QHNT, and NITK…KAAS.

In terms of biological role, component of the cytoskeleton-like structure which stabilizes the shape of the wall-less Mycoplasma. This cytoskeleton-like network of accessory proteins containing HMW proteins 1 to 5 allows the proper anchoring of cytadhesin proteins in the mycoplasmal membrane at the attachment organelle. In Mycoplasma genitalium (strain ATCC 33530 / DSM 19775 / NCTC 10195 / G37) (Mycoplasmoides genitalium), this protein is Cytadherence high molecular weight protein 2 (hmw2).